Reading from the N-terminus, the 226-residue chain is Leucyl/phenylalanyl-tRNA--protein transferase (226 aa).

It belongs to the L/F-transferase family.

It is found in the cytoplasm. The enzyme catalyses N-terminal L-lysyl-[protein] + L-leucyl-tRNA(Leu) = N-terminal L-leucyl-L-lysyl-[protein] + tRNA(Leu) + H(+). The catalysed reaction is N-terminal L-arginyl-[protein] + L-leucyl-tRNA(Leu) = N-terminal L-leucyl-L-arginyl-[protein] + tRNA(Leu) + H(+). It carries out the reaction L-phenylalanyl-tRNA(Phe) + an N-terminal L-alpha-aminoacyl-[protein] = an N-terminal L-phenylalanyl-L-alpha-aminoacyl-[protein] + tRNA(Phe). In terms of biological role, functions in the N-end rule pathway of protein degradation where it conjugates Leu, Phe and, less efficiently, Met from aminoacyl-tRNAs to the N-termini of proteins containing an N-terminal arginine or lysine. This chain is Leucyl/phenylalanyl-tRNA--protein transferase, found in Pseudomonas fluorescens (strain SBW25).